Consider the following 879-residue polypeptide: Paramyosin, long form (879 aa).

Positions 1 to 31 (MSSSQAVRSSKYSYRATSTGPGTADVNIEYI) are nonhelical region. Residue serine 18 is modified to Phosphoserine. Residues 32–858 (QDLSSLSRLE…IIRAKHRTFV (827 aa)) adopt a coiled-coil conformation. A nonhelical region region spans residues 859 to 879 (TTSTVPGSQVYIQETTRTITE).

The protein belongs to the paramyosin family. As to quaternary structure, heterodimer of two isoforms. The more-acidic and less-abundant isoform is phosphorylated. Expressed in all larval and adult muscle tissues. Expression is five times higher in tubular than in fibrillar muscles.

Its subcellular location is the cytoplasm. The protein resides in the myofibril. In terms of biological role, paramyosin is a major structural component of many thick filaments isolated from invertebrate muscles. The polypeptide is Paramyosin, long form (Prm) (Drosophila melanogaster (Fruit fly)).